Consider the following 141-residue polypeptide: Hemoglobin subunit alpha (141 aa).

In terms of domain architecture, Globin spans 1–141; sequence VLSAADKSNV…VSTVLTSKYR (141 aa). Ser3 carries the phosphoserine modification. N6-succinyllysine occurs at positions 7 and 11. Residue Lys16 is modified to N6-acetyllysine; alternate. Lys16 carries the post-translational modification N6-succinyllysine; alternate. At Tyr24 the chain carries Phosphotyrosine. A Phosphoserine modification is found at Ser35. Lys40 is subject to N6-succinyllysine. Phosphoserine is present on Ser49. His58 is an O2 binding site. Residue His87 participates in heme b binding. Ser102 carries the post-translational modification Phosphoserine. Thr108 carries the post-translational modification Phosphothreonine. Phosphoserine is present on Ser124. Thr134 and Thr137 each carry phosphothreonine. Ser138 carries the phosphoserine modification.

The protein belongs to the globin family. In terms of assembly, heterotetramer of two alpha chains and two beta chains. Red blood cells.

Functionally, involved in oxygen transport from the lung to the various peripheral tissues. Hemopressin acts as an antagonist peptide of the cannabinoid receptor CNR1. Hemopressin-binding efficiently blocks cannabinoid receptor CNR1 and subsequent signaling. In Felis catus (Cat), this protein is Hemoglobin subunit alpha (HBA).